A 351-amino-acid chain; its full sequence is Phosphoribosylformylglycinamidine cyclo-ligase (351 aa).

Belongs to the AIR synthase family.

It is found in the cytoplasm. It carries out the reaction 2-formamido-N(1)-(5-O-phospho-beta-D-ribosyl)acetamidine + ATP = 5-amino-1-(5-phospho-beta-D-ribosyl)imidazole + ADP + phosphate + H(+). It participates in purine metabolism; IMP biosynthesis via de novo pathway; 5-amino-1-(5-phospho-D-ribosyl)imidazole from N(2)-formyl-N(1)-(5-phospho-D-ribosyl)glycinamide: step 2/2. This is Phosphoribosylformylglycinamidine cyclo-ligase from Burkholderia multivorans (strain ATCC 17616 / 249).